The sequence spans 367 residues: MKVKVLSLLVPALLVAGAANAAEVYNKDGNKLDLYGKVDGLHYFSDNKDVDGDQTYMRLGFKGETQVTDQLTGYGQWEYQIQGNSAENENNSWTRVAFAGLKFQDVGSFDYGRNYGVVYDVTSWTDVLPEFGGDTYGSDNFMQQRGNGFATYRNTDFFGLVDGLNFAVQYQGKNGNPSGEGFTSGVTNNGRDALRQNGDGVGGSITYDYEGFGIGGAISSSKRTDAQNTAAYIGNGDRAETYTGGLKYDANNIYLAAQYTQTYNATRVGSLGWANKAQNFEAVAQYQFDFGLRPSLAYLQSKGKNLGRGYDDEDILKYVDVGATYYFNKNMSTYVDYKINLLDDNQFTRDAGINTDNIVALGLVYQF.

The N-terminal stretch at 1-21 (MKVKVLSLLVPALLVAGAANA) is a signal peptide. Residues 22–33 (AEVYNKDGNKLD) are Periplasmic-facing. Residues 34–42 (LYGKVDGLH) form a beta stranded membrane-spanning segment. Residues 43–53 (YFSDNKDVDGD) are Extracellular-facing. Residues 54 to 63 (QTYMRLGFKG) traverse the membrane as a beta stranded segment. Residues 64–73 (ETQVTDQLTG) are Periplasmic-facing. The chain crosses the membrane as a beta stranded span at residues 74 to 84 (YGQWEYQIQGN). Topologically, residues 85 to 91 (SAENENN) are extracellular. A beta stranded transmembrane segment spans residues 92–101 (SWTRVAFAGL). The Periplasmic portion of the chain corresponds to 102–106 (KFQDV). The chain crosses the membrane as a beta stranded span at residues 107–115 (GSFDYGRNY). The tract at residues 116–133 (GVVYDVTSWTDVLPEFGG) is loop L3; may constrict the pore. Residues 116–141 (GVVYDVTSWTDVLPEFGGDTYGSDNF) lie on the Extracellular side of the membrane. A beta stranded membrane pass occupies residues 142 to 154 (MQQRGNGFATYRN). The Periplasmic segment spans residues 155-163 (TDFFGLVDG). Residues 164–171 (LNFAVQYQ) form a beta stranded membrane-spanning segment. At 172–200 (GKNGNPSGEGFTSGVTNNGRDALRQNGDG) the chain is on the extracellular side. A beta stranded membrane pass occupies residues 201-207 (VGGSITY). Over 208 to 211 (DYEG) the chain is Periplasmic. The chain crosses the membrane as a beta stranded span at residues 212-219 (FGIGGAIS). The Extracellular portion of the chain corresponds to 220–241 (SSKRTDAQNTAAYIGNGDRAET). A beta stranded membrane pass occupies residues 242–248 (YTGGLKY). Residues 249–252 (DANN) are Periplasmic-facing. Residues 253–260 (IYLAAQYT) form a beta stranded membrane-spanning segment. Residues 261-269 (QTYNATRVG) lie on the Extracellular side of the membrane. A beta stranded membrane pass occupies residues 270–286 (SLGWANKAQNFEAVAQY). Over 287-291 (QFDFG) the chain is Periplasmic. Residues 292 to 299 (LRPSLAYL) traverse the membrane as a beta stranded segment. Over 300–318 (QSKGKNLGRGYDDEDILKY) the chain is Extracellular. The beta stranded transmembrane segment at 319–326 (VDVGATYY) threads the bilayer. At 327 to 330 (FNKN) the chain is on the periplasmic side. Residues 331-338 (MSTYVDYK) traverse the membrane as a beta stranded segment. At 339-358 (INLLDDNQFTRDAGINTDNI) the chain is on the extracellular side. Residues N340, L342, and T355 each contribute to the Mg(2+) site. The beta stranded transmembrane segment at 359–366 (VALGLVYQ) threads the bilayer. Position 367 (F367) is a topological domain, periplasmic.

Belongs to the Gram-negative porin family. Homotrimer. Forms mixed heterotrimers with OmpF and with PhoE; other mixed heterotrimers are also probable.

It is found in the cell outer membrane. Its function is as follows. Forms pores that allow passive diffusion of small molecules across the outer membrane. In terms of biological role, (Microbial infection) Supports colicin E5 entry in the absence of its major receptor OmpF. (Microbial infection) A mixed OmpC-OmpF heterotrimer is the outer membrane receptor for toxin CdiA-EC536; polymorphisms in extracellular loops 4 and 5 of OmpC confer susceptibility to CdiA-EC536-mediated toxicity. The sequence is that of Outer membrane porin C (ompC) from Escherichia coli (strain K12).